The primary structure comprises 481 residues: Chromosomal replication initiator protein DnaA (481 aa).

The domain I, interacts with DnaA modulators stretch occupies residues M1 to P74. The segment at P74–T144 is domain II. Residues A101–V123 are disordered. Residues Q111–V123 show a composition bias toward low complexity. Residues R145 to A361 are domain III, AAA+ region. The ATP site is built by G189, G191, K192, and T193. Positions R362 to G481 are domain IV, binds dsDNA.

It belongs to the DnaA family. As to quaternary structure, oligomerizes as a right-handed, spiral filament on DNA at oriC.

It is found in the cytoplasm. Plays an essential role in the initiation and regulation of chromosomal replication. ATP-DnaA binds to the origin of replication (oriC) to initiate formation of the DNA replication initiation complex once per cell cycle. Binds the DnaA box (a 9 base pair repeat at the origin) and separates the double-stranded (ds)DNA. Forms a right-handed helical filament on oriC DNA; dsDNA binds to the exterior of the filament while single-stranded (ss)DNA is stabiized in the filament's interior. The ATP-DnaA-oriC complex binds and stabilizes one strand of the AT-rich DNA unwinding element (DUE), permitting loading of DNA polymerase. After initiation quickly degrades to an ADP-DnaA complex that is not apt for DNA replication. Binds acidic phospholipids. The protein is Chromosomal replication initiator protein DnaA of Aromatoleum aromaticum (strain DSM 19018 / LMG 30748 / EbN1) (Azoarcus sp. (strain EbN1)).